Consider the following 206-residue polypeptide: High frequency lysogenization protein HflD homolog (206 aa).

Belongs to the HflD family.

The protein resides in the cytoplasm. It localises to the cell inner membrane. The protein is High frequency lysogenization protein HflD homolog of Pseudomonas paraeruginosa (strain DSM 24068 / PA7) (Pseudomonas aeruginosa (strain PA7)).